We begin with the raw amino-acid sequence, 131 residues long: Large ribosomal subunit protein bL19 (131 aa).

Over residues 1–11 (MEETMNNQEAP) the composition is skewed to polar residues. The disordered stretch occupies residues 1 to 20 (MEETMNNQEAPETSEEETVA).

Belongs to the bacterial ribosomal protein bL19 family.

Functionally, this protein is located at the 30S-50S ribosomal subunit interface and may play a role in the structure and function of the aminoacyl-tRNA binding site. This chain is Large ribosomal subunit protein bL19, found in Dehalococcoides mccartyi (strain ATCC BAA-2100 / JCM 16839 / KCTC 5957 / BAV1).